Here is a 348-residue protein sequence, read N- to C-terminus: Photosystem II protein D1 (348 aa).

A run of 3 helical transmembrane segments spans residues 33-50 (YIGW…LATV), 122-137 (HFIF…EWEF), and 146-160 (WIFV…AASA). His-122 lines the chlorophyll a pocket. Tyr-130 is a pheophytin a binding site. Asp-174 and Glu-193 together coordinate [CaMn4O5] cluster. Residues 201–222 (FHILGVAAVFGGSLFSAMHGSL) traverse the membrane as a helical segment. A chlorophyll a-binding site is contributed by His-202. Residues His-219 and 268–269 (SF) each bind a quinone. A Fe cation-binding site is contributed by His-219. A Fe cation-binding site is contributed by His-276. A helical membrane pass occupies residues 278–292 (FLAAWPVIGIWFTSL). His-336, Glu-337, Asp-346, and Ala-348 together coordinate [CaMn4O5] cluster.

The protein belongs to the reaction center PufL/M/PsbA/D family. PSII is composed of 1 copy each of membrane proteins PsbA, PsbB, PsbC, PsbD, PsbE, PsbF, PsbH, PsbI, PsbJ, PsbK, PsbL, PsbM, PsbT, PsbX, PsbY, PsbZ, Psb30/Ycf12, at least 3 peripheral proteins of the oxygen-evolving complex and a large number of cofactors. It forms dimeric complexes. The D1/D2 heterodimer binds P680, chlorophylls that are the primary electron donor of PSII, and subsequent electron acceptors. It shares a non-heme iron and each subunit binds pheophytin, quinone, additional chlorophylls, carotenoids and lipids. D1 provides most of the ligands for the Mn4-Ca-O5 cluster of the oxygen-evolving complex (OEC). There is also a Cl(-1) ion associated with D1 and D2, which is required for oxygen evolution. The PSII complex binds additional chlorophylls, carotenoids and specific lipids. is required as a cofactor. Tyr-165 forms a radical intermediate that is referred to as redox-active TyrZ, YZ or Y-Z.

The protein localises to the plastid. It localises to the chloroplast thylakoid membrane. The catalysed reaction is 2 a plastoquinone + 4 hnu + 2 H2O = 2 a plastoquinol + O2. In terms of biological role, photosystem II (PSII) is a light-driven water:plastoquinone oxidoreductase that uses light energy to abstract electrons from H(2)O, generating O(2) and a proton gradient subsequently used for ATP formation. It consists of a core antenna complex that captures photons, and an electron transfer chain that converts photonic excitation into a charge separation. The D1/D2 (PsbA/PsbD) reaction center heterodimer binds P680, the primary electron donor of PSII as well as several subsequent electron acceptors. This Heterocapsa triquetra (Dinoflagellate) protein is Photosystem II protein D1.